A 357-amino-acid polypeptide reads, in one-letter code: Major outer membrane protein P.IB (357 aa).

Positions 1 to 19 are cleaved as a signal peptide; sequence MKKSLIALTLAALPVAAMA.

It belongs to the Gram-negative porin family. In terms of assembly, homotrimer.

The protein resides in the cell outer membrane. Serves as a slightly cation selective porin. This Neisseria sicca protein is Major outer membrane protein P.IB (por).